The following is a 532-amino-acid chain: Probable cytochrome c oxidase subunit 1 (532 aa).

8 helical membrane passes run 33–53 (IMYI…SLLF), 74–94 (VLIT…ALFG), 95–115 (GFGN…FPRL), 118–138 (ISFW…FVDG), 163–183 (MAIF…INLI), 200–220 (PLFV…MPVL), 252–272 (LFWF…FGIV), and 284–304 (IFGY…GFIV). Position 79 (His-79) interacts with Fe(II)-heme a. Positions 258 and 262 each coordinate Cu cation. 2 residues coordinate Cu cation: His-307 and His-308. The next 2 helical transmembrane spans lie at 318 to 338 (ALIY…IKIF) and 355 to 375 (MLFS…GIIL). His-393 provides a ligand contact to heme a3. 3 helical membrane passes run 394–414 (FHYT…YYWF), 431–451 (FWIT…LGLA), and 473–493 (IGAG…FYTL). His-395 contacts Fe(II)-heme a.

Belongs to the heme-copper respiratory oxidase family.

The protein localises to the cell membrane. It catalyses the reaction 4 Fe(II)-[cytochrome c] + O2 + 8 H(+)(in) = 4 Fe(III)-[cytochrome c] + 2 H2O + 4 H(+)(out). The protein operates within energy metabolism; oxidative phosphorylation. Functionally, cytochrome c oxidase is the component of the respiratory chain that catalyzes the reduction of oxygen to water. Subunits 1-3 form the functional core of the enzyme complex. CO I is the catalytic subunit of the enzyme. Electrons originating in cytochrome c are transferred via the copper A center of subunit 2 and heme A of subunit 1 to the bimetallic center formed by heme A3 and copper B. In Rickettsia bellii (strain RML369-C), this protein is Probable cytochrome c oxidase subunit 1 (ctaD).